Reading from the N-terminus, the 625-residue chain is Vacuolar-sorting receptor 2 (625 aa).

An N-terminal signal peptide occupies residues methionine 1–serine 19. The Lumenal segment spans residues serine 20–serine 567. Positions glutamine 55–isoleucine 167 constitute a PA domain. 3 N-linked (GlcNAc...) asparagine glycosylation sites follow: asparagine 147, asparagine 293, and asparagine 433. EGF-like domains are found at residues glutamate 415–glutamate 465 and glycine 468–lysine 515. Intrachain disulfides connect cysteine 419-cysteine 437, cysteine 426-cysteine 446, cysteine 448-cysteine 464, cysteine 472-cysteine 492, cysteine 479-cysteine 500, cysteine 502-cysteine 514, and cysteine 544-cysteine 557. Positions aspartate 516–isoleucine 558 constitute an EGF-like 3; calcium-binding domain. The chain crosses the membrane as a helical span at residues tryptophan 568–valine 588. Residues tyrosine 589 to leucine 625 are Cytoplasmic-facing. The Tyrosine-based internalization motif signature appears at tyrosine 608–leucine 611.

Belongs to the VSR (BP-80) family. Expressed only in flowers.

The protein resides in the membrane. It is found in the golgi apparatus membrane. It localises to the cytoplasmic vesicle. The protein localises to the clathrin-coated vesicle membrane. Its subcellular location is the prevacuolar compartment membrane. Functionally, vacuolar-sorting receptor (VSR) involved in clathrin-coated vesicles sorting from Golgi apparatus to vacuoles. The chain is Vacuolar-sorting receptor 2 from Arabidopsis thaliana (Mouse-ear cress).